Reading from the N-terminus, the 381-residue chain is Cytochrome b (381 aa).

The next 4 membrane-spanning stretches (helical) occupy residues 34-54 (FGSL…FLAM), 78-99 (WLIR…YFHI), 114-134 (WNIG…GYVL), and 179-199 (FFAF…IHVL). Heme b is bound by residues His84 and His98. Residues His183 and His197 each contribute to the heme b site. His202 is an a ubiquinone binding site. 4 helical membrane passes run 227-247 (YKDA…ALFL), 289-309 (LGGV…PFLH), 321-341 (LTQI…WIGG), and 348-368 (FILI…IALP).

This sequence belongs to the cytochrome b family. In terms of assembly, the cytochrome bc1 complex contains 3 respiratory subunits (MT-CYB, CYC1 and UQCRFS1), 2 core proteins (UQCRC1 and UQCRC2) and probably 6 low-molecular weight proteins. The cofactor is heme b.

The protein localises to the mitochondrion inner membrane. In terms of biological role, component of the ubiquinol-cytochrome c reductase complex (complex III or cytochrome b-c1 complex) that is part of the mitochondrial respiratory chain. The b-c1 complex mediates electron transfer from ubiquinol to cytochrome c. Contributes to the generation of a proton gradient across the mitochondrial membrane that is then used for ATP synthesis. The chain is Cytochrome b (mt-cyb) from Isurus oxyrinchus (Shortfin mako shark).